Here is a 255-residue protein sequence, read N- to C-terminus: 5'-nucleotidase SurE (255 aa).

A divalent metal cation-binding residues include D8, D9, S39, and N91.

The protein belongs to the SurE nucleotidase family. It depends on a divalent metal cation as a cofactor.

It localises to the cytoplasm. It catalyses the reaction a ribonucleoside 5'-phosphate + H2O = a ribonucleoside + phosphate. Functionally, nucleotidase that shows phosphatase activity on nucleoside 5'-monophosphates. The sequence is that of 5'-nucleotidase SurE from Acinetobacter baumannii (strain ATCC 17978 / DSM 105126 / CIP 53.77 / LMG 1025 / NCDC KC755 / 5377).